The sequence spans 158 residues: C-type lectin (158 aa).

A signal peptide spans 1 to 23 (MWQFTVVSLGWLAVFLSLSGAKG). 3 disulfide bridges follow: Cys26–Cys37, Cys54–Cys154, and Cys129–Cys146. In terms of domain architecture, C-type lectin spans 33-155 (RNGVCNKLFP…CASLHPFICQ (123 aa)). Residues 119-121 (EPN) carry the Mannose-binding motif. Ca(2+) contacts are provided by Glu127, Asn142, and Asp143.

Belongs to the true venom lectin family. In terms of tissue distribution, expressed by the venom gland.

It localises to the secreted. Its function is as follows. Mannose-binding lectin which recognizes specific carbohydrate structures and agglutinates a variety of animal cells by binding to cell-surface glycoproteins and glycolipids. May be a calcium-dependent lectin. This Cerberus rynchops (Dog-faced water snake) protein is C-type lectin.